A 196-amino-acid polypeptide reads, in one-letter code: Phosphoheptose isomerase (196 aa).

Residues 31 to 196 enclose the SIS domain; the sequence is VARQFKAGNK…KAGLEAQIAV (166 aa). 46–48 is a binding site for substrate; the sequence is NGG. Positions 55 and 59 each coordinate Zn(2+). Residues E59, 88 to 89, 114 to 116, S119, and Q166 contribute to the substrate site; these read ND and STS. Zn(2+) contacts are provided by Q166 and H174.

The protein belongs to the SIS family. GmhA subfamily. Zn(2+) serves as cofactor.

The protein resides in the cytoplasm. It catalyses the reaction 2 D-sedoheptulose 7-phosphate = D-glycero-alpha-D-manno-heptose 7-phosphate + D-glycero-beta-D-manno-heptose 7-phosphate. It functions in the pathway carbohydrate biosynthesis; D-glycero-D-manno-heptose 7-phosphate biosynthesis; D-glycero-alpha-D-manno-heptose 7-phosphate and D-glycero-beta-D-manno-heptose 7-phosphate from sedoheptulose 7-phosphate: step 1/1. Functionally, catalyzes the isomerization of sedoheptulose 7-phosphate in D-glycero-D-manno-heptose 7-phosphate. This chain is Phosphoheptose isomerase, found in Crocosphaera subtropica (strain ATCC 51142 / BH68) (Cyanothece sp. (strain ATCC 51142)).